The following is a 512-amino-acid chain: Cytochrome P450 82C3 (512 aa).

The helical transmembrane segment at 1-21 threads the bilayer; the sequence is MDTSLFSLFVSILVFVFIALF. Cysteine 451 contributes to the heme binding site.

The protein belongs to the cytochrome P450 family. Heme is required as a cofactor.

It is found in the membrane. In Arabidopsis thaliana (Mouse-ear cress), this protein is Cytochrome P450 82C3 (CYP82C3).